We begin with the raw amino-acid sequence, 476 residues long: Aspartyl/glutamyl-tRNA(Asn/Gln) amidotransferase subunit B (476 aa).

It belongs to the GatB/GatE family. GatB subfamily. Heterotrimer of A, B and C subunits.

It carries out the reaction L-glutamyl-tRNA(Gln) + L-glutamine + ATP + H2O = L-glutaminyl-tRNA(Gln) + L-glutamate + ADP + phosphate + H(+). It catalyses the reaction L-aspartyl-tRNA(Asn) + L-glutamine + ATP + H2O = L-asparaginyl-tRNA(Asn) + L-glutamate + ADP + phosphate + 2 H(+). Functionally, allows the formation of correctly charged Asn-tRNA(Asn) or Gln-tRNA(Gln) through the transamidation of misacylated Asp-tRNA(Asn) or Glu-tRNA(Gln) in organisms which lack either or both of asparaginyl-tRNA or glutaminyl-tRNA synthetases. The reaction takes place in the presence of glutamine and ATP through an activated phospho-Asp-tRNA(Asn) or phospho-Glu-tRNA(Gln). This is Aspartyl/glutamyl-tRNA(Asn/Gln) amidotransferase subunit B from Laribacter hongkongensis (strain HLHK9).